Here is a 187-residue protein sequence, read N- to C-terminus: Ribosome-recycling factor (187 aa).

The protein belongs to the RRF family.

Its subcellular location is the cytoplasm. Responsible for the release of ribosomes from messenger RNA at the termination of protein biosynthesis. May increase the efficiency of translation by recycling ribosomes from one round of translation to another. This is Ribosome-recycling factor from Ruegeria pomeroyi (strain ATCC 700808 / DSM 15171 / DSS-3) (Silicibacter pomeroyi).